The primary structure comprises 406 residues: Cysteine desulfurase (406 aa).

At lysine 226 the chain carries N6-(pyridoxal phosphate)lysine. Residue cysteine 364 is the Cysteine persulfide intermediate of the active site.

This sequence belongs to the class-V pyridoxal-phosphate-dependent aminotransferase family. Csd subfamily. In terms of assembly, homodimer. Interacts with SufE and the SufBCD complex composed of SufB, SufC and SufD. The interaction with SufE is required to mediate the direct transfer of the sulfur atom from the S-sulfanylcysteine. Pyridoxal 5'-phosphate serves as cofactor.

The protein resides in the cytoplasm. It carries out the reaction (sulfur carrier)-H + L-cysteine = (sulfur carrier)-SH + L-alanine. It catalyses the reaction L-selenocysteine + AH2 = hydrogenselenide + L-alanine + A + H(+). The protein operates within cofactor biosynthesis; iron-sulfur cluster biosynthesis. Cysteine desulfurases mobilize the sulfur from L-cysteine to yield L-alanine, an essential step in sulfur metabolism for biosynthesis of a variety of sulfur-containing biomolecules. Component of the suf operon, which is activated and required under specific conditions such as oxidative stress and iron limitation. Acts as a potent selenocysteine lyase in vitro, that mobilizes selenium from L-selenocysteine. Selenocysteine lyase activity is however unsure in vivo. The protein is Cysteine desulfurase of Salmonella gallinarum (strain 287/91 / NCTC 13346).